We begin with the raw amino-acid sequence, 431 residues long: Glutamate--tRNA ligase 1 (431 aa).

The 'HIGH' region signature appears at 6–16 (PSPTGDMHIGN). A 'KMSKS' region motif is present at residues 235-239 (KMSKR). Lysine 238 is a binding site for ATP.

Belongs to the class-I aminoacyl-tRNA synthetase family. Glutamate--tRNA ligase type 1 subfamily. Monomer.

The protein localises to the cytoplasm. The enzyme catalyses tRNA(Glu) + L-glutamate + ATP = L-glutamyl-tRNA(Glu) + AMP + diphosphate. Functionally, catalyzes the attachment of glutamate to tRNA(Glu) in a two-step reaction: glutamate is first activated by ATP to form Glu-AMP and then transferred to the acceptor end of tRNA(Glu). The protein is Glutamate--tRNA ligase 1 of Campylobacter jejuni subsp. jejuni serotype O:2 (strain ATCC 700819 / NCTC 11168).